Consider the following 270-residue polypeptide: uncharacterized protein (270 aa).

Residue 30–55 (ATGSLGRVAARALADAGARLTLAGGN) participates in NADP(+) binding. S157 serves as a coordination point for substrate. The active-site Proton acceptor is the Y171.

Belongs to the short-chain dehydrogenases/reductases (SDR) family.

This is an uncharacterized protein from Mycobacterium tuberculosis (strain CDC 1551 / Oshkosh).